The following is a 505-amino-acid chain: Trans-cinnamate 4-monooxygenase (505 aa).

The helical transmembrane segment at 3 to 23 (LLLLEKTLLGSFVAILVAILV) threads the bilayer. (E)-cinnamate contacts are provided by residues 213 to 218 (RSRLAQ) and Ala306. Cys447 lines the heme pocket.

Belongs to the cytochrome P450 family. It depends on heme as a cofactor.

The protein resides in the membrane. The catalysed reaction is (E)-cinnamate + reduced [NADPH--hemoprotein reductase] + O2 = (E)-4-coumarate + oxidized [NADPH--hemoprotein reductase] + H2O + H(+). It functions in the pathway phenylpropanoid metabolism; trans-4-coumarate biosynthesis; trans-4-coumarate from trans-cinnamate: step 1/1. Functionally, catalyzes the first oxidative step of the phenylpropanoid pathway in higher plants by transforming trans-cinnamate into p-coumarate. The compounds formed by this pathway are essential components for lignification, pollination, and defense against ultraviolet light, predators and pathogens. The sequence is that of Trans-cinnamate 4-monooxygenase (CYP73A13) from Populus tremuloides (Quaking aspen).